The chain runs to 344 residues: UDP-3-O-acylglucosamine N-acyltransferase (344 aa).

The active-site Proton acceptor is the H248.

The protein belongs to the transferase hexapeptide repeat family. LpxD subfamily. As to quaternary structure, homotrimer.

It catalyses the reaction a UDP-3-O-[(3R)-3-hydroxyacyl]-alpha-D-glucosamine + a (3R)-hydroxyacyl-[ACP] = a UDP-2-N,3-O-bis[(3R)-3-hydroxyacyl]-alpha-D-glucosamine + holo-[ACP] + H(+). It participates in bacterial outer membrane biogenesis; LPS lipid A biosynthesis. Catalyzes the N-acylation of UDP-3-O-acylglucosamine using 3-hydroxyacyl-ACP as the acyl donor. Is involved in the biosynthesis of lipid A, a phosphorylated glycolipid that anchors the lipopolysaccharide to the outer membrane of the cell. In Prochlorococcus marinus (strain MIT 9312), this protein is UDP-3-O-acylglucosamine N-acyltransferase.